We begin with the raw amino-acid sequence, 137 residues long: Molluscan insulin-related peptide 2 (137 aa).

An N-terminal signal peptide occupies residues 1–31; that stretch reads MVGVRLVFTNAFVVTVLLTLLLDVVVKPAEG. Gln-32 bears the Pyrrolidone carboxylic acid mark. Disulfide bonds link Cys-47–Cys-123, Cys-59–Cys-136, and Cys-122–Cys-127. Residues 71-83 constitute a propeptide, C-beta peptide like; it reads DAETGWLLPETMV. Positions 86–110 are cleaved as a propeptide — C-alpha peptide like; sequence NAETDLDDPLRNIKLSSESALTYLT. Residue Gln-113 is modified to Pyrrolidone carboxylic acid.

This sequence belongs to the insulin family. In terms of assembly, heterodimer of a B chain and an A chain linked by two disulfide bonds. As to expression, expressed in the cerebral light-green cells which are giant neuroendocrines cells involved in the control of growth.

The protein resides in the cytoplasmic vesicle. It is found in the secretory vesicle. In Lymnaea stagnalis (Great pond snail), this protein is Molluscan insulin-related peptide 2.